Here is a 262-residue protein sequence, read N- to C-terminus: Phosphoribosylformylglycinamidine synthase subunit PurQ (262 aa).

The Glutamine amidotransferase type-1 domain occupies 2 to 238; it reads RIAVIQFPGT…FAWQLPRKHP (237 aa). The active-site Nucleophile is Cys-87. Active-site residues include His-223 and Glu-225.

In terms of assembly, part of the FGAM synthase complex composed of 1 PurL, 1 PurQ and 2 PurS subunits.

It localises to the cytoplasm. The catalysed reaction is N(2)-formyl-N(1)-(5-phospho-beta-D-ribosyl)glycinamide + L-glutamine + ATP + H2O = 2-formamido-N(1)-(5-O-phospho-beta-D-ribosyl)acetamidine + L-glutamate + ADP + phosphate + H(+). It carries out the reaction L-glutamine + H2O = L-glutamate + NH4(+). It participates in purine metabolism; IMP biosynthesis via de novo pathway; 5-amino-1-(5-phospho-D-ribosyl)imidazole from N(2)-formyl-N(1)-(5-phospho-D-ribosyl)glycinamide: step 1/2. In terms of biological role, part of the phosphoribosylformylglycinamidine synthase complex involved in the purines biosynthetic pathway. Catalyzes the ATP-dependent conversion of formylglycinamide ribonucleotide (FGAR) and glutamine to yield formylglycinamidine ribonucleotide (FGAM) and glutamate. The FGAM synthase complex is composed of three subunits. PurQ produces an ammonia molecule by converting glutamine to glutamate. PurL transfers the ammonia molecule to FGAR to form FGAM in an ATP-dependent manner. PurS interacts with PurQ and PurL and is thought to assist in the transfer of the ammonia molecule from PurQ to PurL. The sequence is that of Phosphoribosylformylglycinamidine synthase subunit PurQ from Methanothrix thermoacetophila (strain DSM 6194 / JCM 14653 / NBRC 101360 / PT) (Methanosaeta thermophila).